The following is a 461-amino-acid chain: D-phenylhydantoinase (461 aa).

Positions 59, 61, and 151 each coordinate a divalent metal cation. At lysine 151 the chain carries N6-carboxylysine. Tyrosine 156 serves as a coordination point for substrate. 2 residues coordinate a divalent metal cation: histidine 182 and histidine 239. Serine 286 contributes to the substrate binding site. Residue aspartate 313 coordinates a divalent metal cation. Asparagine 335 serves as a coordination point for substrate.

It belongs to the metallo-dependent hydrolases superfamily. Hydantoinase/dihydropyrimidinase family. In terms of assembly, homotetramer. Requires a divalent metal cation as cofactor. In terms of processing, carboxylation allows a single lysine to coordinate two divalent metal cations.

It carries out the reaction D-5-phenylhydantoin + H2O = N-carbamoyl-D-phenylglycine + H(+). Catalyzes the stereospecific hydrolysis of the cyclic amide bond of D-hydantoin derivatives with an aromatic side chains at the 5'-position. Has no activity on dihydropyrimidines. The physiological function is unknown. The protein is D-phenylhydantoinase of Escherichia coli O9:H4 (strain HS).